The sequence spans 396 residues: Stearoyl-[acyl-carrier-protein] 9-desaturase 2, chloroplastic (396 aa).

The transit peptide at 1–32 (MALRPNDVTLRLTPPLAAAARRNRRAAAGGVR) directs the protein to the chloroplast. Positions 138, 176, 179, 229, 262, and 265 each coordinate Fe cation.

It belongs to the fatty acid desaturase type 2 family. As to quaternary structure, homodimer. The cofactor is Fe(2+).

It localises to the plastid. The protein resides in the chloroplast. The enzyme catalyses octadecanoyl-[ACP] + 2 reduced [2Fe-2S]-[ferredoxin] + O2 + 2 H(+) = (9Z)-octadecenoyl-[ACP] + 2 oxidized [2Fe-2S]-[ferredoxin] + 2 H2O. It participates in lipid metabolism; fatty acid metabolism. Its function is as follows. Converts stearoyl-ACP to oleoyl-ACP by introduction of a cis double bond between carbons 9 and 10 of the acyl chain. Required for the repression of the salicylic acid (SA) signaling pathway. This Oryza sativa subsp. indica (Rice) protein is Stearoyl-[acyl-carrier-protein] 9-desaturase 2, chloroplastic (SSI2).